Consider the following 476-residue polypeptide: ATP synthase subunit beta (476 aa).

154 to 161 (GGAGVGKT) contributes to the ATP binding site.

Belongs to the ATPase alpha/beta chains family. In terms of assembly, F-type ATPases have 2 components, CF(1) - the catalytic core - and CF(0) - the membrane proton channel. CF(1) has five subunits: alpha(3), beta(3), gamma(1), delta(1), epsilon(1). CF(0) has three main subunits: a(1), b(2) and c(9-12). The alpha and beta chains form an alternating ring which encloses part of the gamma chain. CF(1) is attached to CF(0) by a central stalk formed by the gamma and epsilon chains, while a peripheral stalk is formed by the delta and b chains.

It localises to the cell inner membrane. The enzyme catalyses ATP + H2O + 4 H(+)(in) = ADP + phosphate + 5 H(+)(out). In terms of biological role, produces ATP from ADP in the presence of a proton gradient across the membrane. The catalytic sites are hosted primarily by the beta subunits. In Afipia carboxidovorans (strain ATCC 49405 / DSM 1227 / KCTC 32145 / OM5) (Oligotropha carboxidovorans), this protein is ATP synthase subunit beta.